A 78-amino-acid chain; its full sequence is DNA gyrase inhibitor YacG (78 aa).

Positions 7, 10, 26, and 30 each coordinate Zn(2+).

It belongs to the DNA gyrase inhibitor YacG family. As to quaternary structure, interacts with GyrB. It depends on Zn(2+) as a cofactor.

Inhibits all the catalytic activities of DNA gyrase by preventing its interaction with DNA. Acts by binding directly to the C-terminal domain of GyrB, which probably disrupts DNA binding by the gyrase. The polypeptide is DNA gyrase inhibitor YacG (Shewanella piezotolerans (strain WP3 / JCM 13877)).